The chain runs to 278 residues: Large ribosomal subunit protein uL2c (278 aa).

A disordered region spans residues valine 224–serine 267.

It belongs to the universal ribosomal protein uL2 family. Part of the 50S ribosomal subunit.

It is found in the plastid. The protein localises to the chloroplast. The polypeptide is Large ribosomal subunit protein uL2c (rpl2) (Huperzia lucidula (Shining clubmoss)).